The sequence spans 178 residues: Small ribosomal subunit protein uS5 (178 aa).

The region spanning 15–78 is the S5 DRBM domain; the sequence is FEEKIIEIRR…SAAKRNIVEV (64 aa).

This sequence belongs to the universal ribosomal protein uS5 family. In terms of assembly, part of the 30S ribosomal subunit. Contacts proteins S4 and S8.

Its function is as follows. With S4 and S12 plays an important role in translational accuracy. In terms of biological role, located at the back of the 30S subunit body where it stabilizes the conformation of the head with respect to the body. The protein is Small ribosomal subunit protein uS5 of Thermotoga maritima (strain ATCC 43589 / DSM 3109 / JCM 10099 / NBRC 100826 / MSB8).